A 402-amino-acid chain; its full sequence is Multidrug resistance protein MdtH (402 aa).

Residues 1 to 12 are Cytoplasmic-facing; that stretch reads MSRVSQARNLGK. The helical transmembrane segment at 13-33 threads the bilayer; sequence YFLLIDNMLVVLVFFVVFPLI. The Periplasmic portion of the chain corresponds to 34-98; the sequence is SIRFVDQMGW…GFATMGIAHE (65 aa). A helical transmembrane segment spans residues 99 to 116; the sequence is PWLLWFSCFLSGLGGTLF. Topologically, residues 117–138 are cytoplasmic; that stretch reads DPPRSALVVKLIRPEQRGRFFS. A helical transmembrane segment spans residues 139–159; the sequence is LLMMQDSAGAVIGALLGSWLL. The Periplasmic portion of the chain corresponds to 160-164; sequence QYDFR. Residues 165–185 traverse the membrane as a helical segment; the sequence is LVCATGAILFILCALFNAWLL. Residues 186–213 are Cytoplasmic-facing; it reads PAWKLSTVRTPVREGMRRVMSDKRFVTY. A helical membrane pass occupies residues 214–234; it reads VLTLAGYYMLAVQVMLMLPIM. At 235–243 the chain is on the periplasmic side; it reads VNDIAGSPA. The helical transmembrane segment at 244–264 threads the bilayer; the sequence is AVKWMYAIEACLSLTLLYPIA. Residues 265–276 are Cytoplasmic-facing; it reads RWSEKRFRLEHR. Residues 277–297 form a helical membrane-spanning segment; that stretch reads LMAGLLVMSLSMIPIGMVGNL. Residues 298–299 lie on the Periplasmic side of the membrane; sequence QQ. Residues 300–320 traverse the membrane as a helical segment; sequence LFTLICAFYIGSVIAEPARET. The Cytoplasmic segment spans residues 321 to 339; that stretch reads LSASLADARARGSYMGFSR. A helical membrane pass occupies residues 340–360; the sequence is LGLAIGGAIGYIGGGWLFDMG. The Periplasmic portion of the chain corresponds to 361 to 367; it reads KALTQPE. The chain crosses the membrane as a helical span at residues 368–388; the sequence is LPWMMLGIIGFITFLALGWQF. Residues 389–402 lie on the Cytoplasmic side of the membrane; sequence SHKRTPRRMLEPGA.

This sequence belongs to the major facilitator superfamily. DHA1 family. MdtH (TC 2.A.1.2.21) subfamily.

The protein localises to the cell inner membrane. This Salmonella choleraesuis (strain SC-B67) protein is Multidrug resistance protein MdtH.